A 2493-amino-acid chain; its full sequence is Polyprotein P1234 (2493 aa).

The 232-residue stretch at 28 to 259 folds into the Alphavirus-like MT domain; the sequence is EAKQVTDNDH…EKRDLLRSWH (232 aa). A nsP1 membrane-binding region spans residues 244–263; sequence GSTIYHEKRDLLRSWHLPSV. The S-palmitoyl cysteine; by host moiety is linked to residue cysteine 419. The 152-residue stretch at 690-841 folds into the (+)RNA virus helicase ATP-binding domain; that stretch reads ELVDPPFHEF…HEICTQVFHK (152 aa). 721-728 contributes to the a ribonucleoside 5'-triphosphate binding site; the sequence is GVPGSGKS. One can recognise a (+)RNA virus helicase C-terminal domain in the interval 842–990; the sequence is SISRRCTKSV…IEEWQAEHDA (149 aa). Positions 1003–1322 constitute a Peptidase C9 domain; it reads DVFQNKANVC…STLTNIYTGS (320 aa). The nucleolus localization signal stretch occupies residues 1004-1023; sequence VFQNKANVCWAKALVPVLKT. Cysteine 1012 (for cysteine protease nsP2 activity) is an active-site residue. A Nuclear export signal motif is present at residues 1056–1065; that stretch reads VRFFGLDLDS. The For cysteine protease nsP2 activity role is filled by histidine 1081. Positions 1179–1183 match the Nuclear localization signal motif; that stretch reads PGKKV. Residues 1330 to 1489 enclose the Macro domain; the sequence is APSYHVVRGD…TLKEAVARRE (160 aa). The ADP-D-ribose site is built by aspartate 1339, asparagine 1353, glycine 1361, glycine 1441, isoleucine 1442, and phenylalanine 1443. Zn(2+) is bound by residues cysteine 1596, cysteine 1598, cysteine 1621, and cysteine 1639. 2 disordered regions span residues 1664 to 1684 and 1790 to 1826; these read PVEE…TPEQ and APRT…STPP. Residues 1814-1823 are compositionally biased toward polar residues; sequence RASSRTSLVS. A run of 2 repeats spans residues 1818–1839 and 1852–1873. Residues 1818–1873 are 2 X 21 AA approximate repeats, binding to host FXR family members; the sequence is RTSLVSTPPGVNRVITREELEALTPSRAPSRSASRTSLVSNPPGVNRVITREEFEA. A RdRp catalytic domain is found at 2250-2365; that stretch reads DCVLETDIAS…KGVKSDKLMA (116 aa).

Interacts with non-structural protein 3. Interacts with RNA-directed RNA polymerase nsP4. Interacts with protease nsP2. interacts with itself. In terms of assembly, interacts with mRNA-capping enzyme nsP1. Interacts with host DDX1. Interacts with host DDX3. Interacts (via C-terminus) with host FXR1; this interaction inhibits the formation of host stress granules on viral mRNAs and the nsp3-FXR1 complexes bind viral RNAs and probably orchestrate the assembly of viral replication complexes. Interacts (via C-terminus) with host FXR2; this interaction inhibits the formation of host stress granules on viral mRNAs and the nsp3-FXR2 complexes bind viral RNAs and probably orchestrate the assembly of viral replication complexes. Interacts (via C-terminus) with host FMR1; this interaction inhibits the formation of host stress granules on viral mRNAs and the nsp3-FMR1 complexes bind viral RNAs and probably orchestrate the assembly of viral replication complexes. As to quaternary structure, interacts with mRNA-capping enzyme nsP1. Interacts with protease nsP2. interacts with itself. Interacts with RNA-directed RNA polymerase nsP4. Interacts with mRNA-capping enzyme nsP1. Interacts with KPNA1/karyopherin-alpha1; this interaction probably allows the active transport of protease nsP2 into the host nucleus. It depends on Mg(2+) as a cofactor. Requires Mn(2+) as cofactor. Specific enzymatic cleavages in vivo yield mature proteins. The processing of the polyprotein is temporally regulated. In early stages (1.7 hpi), P1234 is first cleaved in trans through its nsP2 protease activity, releasing P123' and nsP4, which associate to form the early replication complex. At the same time, P1234 is also cut at the nsP1/nsP2 site early in infection but with lower efficiency. After replication of the viral minus-strand RNAs (4 hpi), the polyproteins are cut at the nsP1/nsP2 and nsP2/nsP3 sites very efficiently, preventing accumulation of P123' and P1234 and allowing the formation of the late replication complex. NsP3'/nsP4 site is not cleaved anymore and P34 is produced rather than nsP4. Post-translationally, specific enzymatic cleavages in vivo yield mature proteins. The processing of the polyprotein is temporally regulated. In early stages (1.7 hpi), P123 is cleaved at the nsP1/nsP2 site with low efficiency. After replication of the viral minus-strand RNAs (4 hpi), the polyproteins are cut at the nsP1/nsP2 and nsP2/nsP3 sites very efficiently, preventing accumulation of P123 and allowing the formation of the late replication complex. In terms of processing, specific enzymatic cleavages in vivo yield mature proteins. The processing of the polyprotein is temporally regulated. In early stages (1.7 hpi), P123' is cleaved at the nsP1/nsP2 site with low efficiency. After replication of the viral minus-strand RNAs (4 hpi), the polyproteins are cut at the nsP1/nsP2 and nsP2/nsP3 sites very efficiently, preventing accumulation of P123' and allowing the formation of the late replication complex. Palmitoylated by host palmitoyltransferases ZDHHC2 and ZDHHC19. Post-translationally, phosphorylated by host on serines and threonines. In terms of processing, ubiquitinated; targets the protein for rapid degradation via the ubiquitin system. Nsp4 is present in extremely low quantities due to low frequency of translation through the amber stop-codon and the degradation by the ubiquitin pathway.

It is found in the host cytoplasmic vesicle membrane. The protein localises to the host cell membrane. It localises to the host cell projection. The protein resides in the host filopodium. Its subcellular location is the host nucleus. It is found in the host cytoplasm. The catalysed reaction is GTP + S-adenosyl-L-methionine = N(7)-methyl-GTP + S-adenosyl-L-homocysteine. The enzyme catalyses N(7)-methyl-GTP + L-histidyl-[protein] = N(tele)-(N(7)-methylguanosine 5'-phospho)-L-histidyl-[protein] + diphosphate. It catalyses the reaction N(tele)-(N(7)-methylguanosine 5'-phospho)-L-histidyl-[protein] + a 5'-end diphospho-(purine-ribonucleoside) in mRNA + H(+) = a 5'-end (N(7)-methyl 5'-triphosphoguanosine)-(purine-ribonucleoside) in mRNA + L-histidyl-[protein]. It carries out the reaction a 5'-end triphospho-ribonucleoside in mRNA + H2O = a 5'-end diphospho-ribonucleoside in mRNA + phosphate + H(+). The catalysed reaction is a ribonucleoside 5'-triphosphate + H2O = a ribonucleoside 5'-diphosphate + phosphate + H(+). The enzyme catalyses ATP + H2O = ADP + phosphate + H(+). It catalyses the reaction RNA(n) + a ribonucleoside 5'-triphosphate = RNA(n+1) + diphosphate. It carries out the reaction 4-O-(ADP-D-ribosyl)-L-aspartyl-[protein] + H2O = L-aspartyl-[protein] + ADP-D-ribose + H(+). The catalysed reaction is 5-O-(ADP-D-ribosyl)-L-glutamyl-[protein] + H2O = L-glutamyl-[protein] + ADP-D-ribose + H(+). The enzyme catalyses RNA(n) + ATP = RNA(n)-3'-adenine ribonucleotide + diphosphate. It catalyses the reaction ADP-alpha-D-ribose 1''-phosphate + H2O = ADP-D-ribose + phosphate. Its activity is regulated as follows. Inhibited by sinefungin. In terms of biological role, inactive precursor of the viral replicase, which is activated by cleavages carried out by the viral protease nsP2. The early replication complex formed by the polyprotein P123 and nsP4 synthesizes the minus-strand RNAs (antigenome). Polyprotein P123 is a short-lived polyprotein that accumulates during early stage of infection. As soon P123 is cleaved into mature proteins, the plus-strand RNAs synthesis begins. Functionally, the early replication complex formed by the polyprotein P123' and nsP4 synthesizes minus-strand RNAs (antigenome). Polyprotein P123' is a short-lived polyprotein that accumulates during early stage of infection. As soon P123' is cleaved into mature proteins, the plus-strand RNAs synthesis begins. Its function is as follows. Cytoplasmic capping enzyme that catalyzes two virus-specific reactions: methyltransferase and nsP1 guanylyltransferase. mRNA-capping is necessary since all viral RNAs are synthesized in the cytoplasm, and host capping enzymes are restricted to the nucleus. The enzymatic reaction involves a covalent link between 7-methyl-GMP and nsP1, whereas eukaryotic capping enzymes form a covalent complex only with GMP. NsP1 capping consists in the following reactions: GTP is first methylated into 7-methyl-GMP and then is covalently linked to nsP1 to form the m7GMp-nsP1 complex from which 7-methyl-GMP complex is transferred to the mRNA to create the cap structure. NsP1 is also needed for the initiation of the minus-strand RNAs synthesis. Probably serves as a membrane anchor for the replication complex composed of nsP1-nsP4. Nsp1 is needed for the initiation of the minus-strand RNAs synthesis. Palmitoylated nsP1 is remodeling host cell cytoskeleton, and induces filopodium-like structure formation at the surface of the host cell. In terms of biological role, multifunctional protein whose N-terminus is part of the RNA polymerase complex and displays NTPase, RNA triphosphatase and helicase activities. NTPase and RNA triphosphatase are involved in viral RNA capping and helicase keeps a check on the dsRNA replication intermediates. The C-terminus harbors a protease that specifically cleaves the polyproteins and releases the mature proteins. Required for the shutoff of minus-strand RNAs synthesis. Inhibits host translation to ensure maximal viral gene expression and evade host immune response. Seems to be essential for minus-strand RNAs and subgenomic 26S mRNAs synthesis. Displays mono-ADP-ribosylhydrolase activity. ADP-ribosylation is a post-translational modification that controls various processes of the host cell and the virus probably needs to revert it for optimal viral replication. Binds proteins of FXR family and sequesters them into the viral RNA replication complexes thereby inhibiting the formation of host stress granules on viral mRNAs. The nsp3-FXR complexes bind viral RNAs and probably orchestrate the assembly of viral replication complexes, thanks to the ability of FXR family members to self-assemble and bind DNA. Functionally, seems to be essential for minus-strand RNAs and subgenomic 26S mRNAs synthesis. Displays mono-ADP-ribosylhydrolase activity. ADP-ribosylation is a post-translational modification that controls various processes of the host cell and the virus probably needs to revert it for optimal viral replication. Binds proteins of FXR family and sequesters them into the viral RNA replication complexes thereby inhibiting the formation of host stress granules on viral mRNAs. The nsp3'-FXR complexes bind viral RNAs and probably orchestrate the assembly of viral replication complexes, thanks to the ability of FXR family members to self-assemble and bind DNA. Its function is as follows. RNA dependent RNA polymerase. Replicates genomic and antigenomic RNA by recognizing replications specific signals. The early replication complex formed by the polyprotein P123 and nsP4 synthesizes minus-strand RNAs. The late replication complex composed of fully processed nsP1-nsP4 is responsible for the production of genomic and subgenomic plus-strand RNAs. This chain is Polyprotein P1234, found in Bos taurus (Bovine).